The following is a 413-amino-acid chain: Arginine biosynthesis bifunctional protein ArgJ (413 aa).

T154, K180, T191, E277, N408, and T413 together coordinate substrate. T191 serves as the catalytic Nucleophile.

This sequence belongs to the ArgJ family. Heterotetramer of two alpha and two beta chains.

The protein localises to the cytoplasm. It carries out the reaction N(2)-acetyl-L-ornithine + L-glutamate = N-acetyl-L-glutamate + L-ornithine. It catalyses the reaction L-glutamate + acetyl-CoA = N-acetyl-L-glutamate + CoA + H(+). Its pathway is amino-acid biosynthesis; L-arginine biosynthesis; L-ornithine and N-acetyl-L-glutamate from L-glutamate and N(2)-acetyl-L-ornithine (cyclic): step 1/1. It participates in amino-acid biosynthesis; L-arginine biosynthesis; N(2)-acetyl-L-ornithine from L-glutamate: step 1/4. Its function is as follows. Catalyzes two activities which are involved in the cyclic version of arginine biosynthesis: the synthesis of N-acetylglutamate from glutamate and acetyl-CoA as the acetyl donor, and of ornithine by transacetylation between N(2)-acetylornithine and glutamate. This Synechocystis sp. (strain ATCC 27184 / PCC 6803 / Kazusa) protein is Arginine biosynthesis bifunctional protein ArgJ.